A 237-amino-acid chain; its full sequence is Myb-related protein MYBAS1 (237 aa).

HTH myb-type domains follow at residues 5–57 (REEM…VNYL) and 58–112 (HPGL…RKKA). Residues 33 to 57 (WDFVAKVSGLNRTGKSCRLRWVNYL) constitute a DNA-binding region (H-T-H motif). The Bipartite nuclear localization signal 1 motif lies at 62-65 (KHGR). A DNA-binding region (H-T-H motif) is located at residues 85 to 108 (WSRIARRLPGRTDNEIKNYWRTHM). The Bipartite nuclear localization signal 2 motif lies at 109–117 (RKKAQERRG).

It is found in the nucleus. Its function is as follows. Transcription factor. This Oryza sativa subsp. japonica (Rice) protein is Myb-related protein MYBAS1 (MYBAS1).